The following is a 622-amino-acid chain: Chaperone protein HscA homolog (622 aa).

Belongs to the heat shock protein 70 family.

Its function is as follows. Chaperone involved in the maturation of iron-sulfur cluster-containing proteins. Has a low intrinsic ATPase activity which is markedly stimulated by HscB. This is Chaperone protein HscA homolog from Burkholderia cenocepacia (strain ATCC BAA-245 / DSM 16553 / LMG 16656 / NCTC 13227 / J2315 / CF5610) (Burkholderia cepacia (strain J2315)).